We begin with the raw amino-acid sequence, 595 residues long: Putative lipase atg15 (595 aa).

Residues M1 to D20 are Cytoplasmic-facing. A helical; Signal-anchor for type II membrane protein transmembrane segment spans residues L21 to G41. The Lumenal portion of the chain corresponds to S42–F595. 5 N-linked (GlcNAc...) asparagine glycosylation sites follow: N164, N199, N221, N279, and N303. The active-site Charge relay system is S319. N-linked (GlcNAc...) asparagine glycosylation is present at N465.

The protein belongs to the AB hydrolase superfamily. Lipase family. As to quaternary structure, binds to both phosphatidylinositol (PI) and phosphatidylinositol 3,5-bisphosphate (PIP2).

The protein localises to the endosome. The protein resides in the multivesicular body membrane. It is found in the prevacuolar compartment membrane. It carries out the reaction a triacylglycerol + H2O = a diacylglycerol + a fatty acid + H(+). Its function is as follows. Lipase which is essential for lysis of subvacuolar cytoplasm to vacuole targeted bodies and intravacuolar autophagic bodies. Involved in the lysis of intravacuolar multivesicular body (MVB) vesicles. The intravacuolar membrane disintegration by atg15 is critical to life span extension. In Aspergillus niger (strain ATCC MYA-4892 / CBS 513.88 / FGSC A1513), this protein is Putative lipase atg15 (atg15).